A 129-amino-acid chain; its full sequence is Phosphoribosyl-AMP cyclohydrolase (129 aa).

Residue Asp87 participates in Mg(2+) binding. Cys88 serves as a coordination point for Zn(2+). Mg(2+) contacts are provided by Asp89 and Asp91. Residues Cys104 and Cys111 each contribute to the Zn(2+) site.

It belongs to the PRA-CH family. As to quaternary structure, homodimer. Mg(2+) serves as cofactor. The cofactor is Zn(2+).

The protein resides in the cytoplasm. It carries out the reaction 1-(5-phospho-beta-D-ribosyl)-5'-AMP + H2O = 1-(5-phospho-beta-D-ribosyl)-5-[(5-phospho-beta-D-ribosylamino)methylideneamino]imidazole-4-carboxamide. The protein operates within amino-acid biosynthesis; L-histidine biosynthesis; L-histidine from 5-phospho-alpha-D-ribose 1-diphosphate: step 3/9. Functionally, catalyzes the hydrolysis of the adenine ring of phosphoribosyl-AMP. This chain is Phosphoribosyl-AMP cyclohydrolase, found in Ruegeria sp. (strain TM1040) (Silicibacter sp.).